We begin with the raw amino-acid sequence, 219 residues long: Putative mediator of RNA polymerase II transcription subunit 10 (219 aa).

A compositionally biased stretch (low complexity) spans 1–39 (MEQQQPQQQNDGQQQQQQQQQHQQQQQQQQQQQQQQQQS). Disordered stretches follow at residues 1–42 (MEQQ…SEQE) and 177–219 (KETQ…INNN). 2 coiled-coil regions span residues 13–74 (QQQQ…VVEE) and 166–219 (EYAE…INNN). A compositionally biased stretch (basic and acidic residues) spans 177-192 (KETQEQQNDDQIKVDD). A compositionally biased stretch (low complexity) spans 194 to 219 (NNNNNNNNNNNYNNNNNNNNNNINNN).

Belongs to the Mediator complex subunit 10 family. As to quaternary structure, component of the Mediator complex.

Its subcellular location is the nucleus. Its function is as follows. Component of the Mediator complex, a coactivator involved in the regulated transcription of nearly all RNA polymerase II-dependent genes. Mediator functions as a bridge to convey information from gene-specific regulatory proteins to the basal RNA polymerase II transcription machinery. Mediator is recruited to promoters by direct interactions with regulatory proteins and serves as a scaffold for the assembly of a functional preinitiation complex with RNA polymerase II and the general transcription factors. In Dictyostelium discoideum (Social amoeba), this protein is Putative mediator of RNA polymerase II transcription subunit 10 (med10).